A 104-amino-acid chain; its full sequence is Small ribosomal subunit protein uS10 (104 aa).

The protein belongs to the universal ribosomal protein uS10 family. Part of the 30S ribosomal subunit.

Involved in the binding of tRNA to the ribosomes. The polypeptide is Small ribosomal subunit protein uS10 (Xanthomonas oryzae pv. oryzae (strain MAFF 311018)).